A 130-amino-acid polypeptide reads, in one-letter code: Small ribosomal subunit protein uS11 (130 aa).

This sequence belongs to the universal ribosomal protein uS11 family. In terms of assembly, part of the 30S ribosomal subunit. Interacts with proteins S7 and S18. Binds to IF-3.

In terms of biological role, located on the platform of the 30S subunit, it bridges several disparate RNA helices of the 16S rRNA. Forms part of the Shine-Dalgarno cleft in the 70S ribosome. The protein is Small ribosomal subunit protein uS11 of Blochmanniella floridana.